Reading from the N-terminus, the 126-residue chain is Glycine cleavage system H protein (126 aa).

The Lipoyl-binding domain maps to 22–104 (VAYVGITDYA…YGEGWLIKMK (83 aa)). Position 63 is an N6-lipoyllysine (lysine 63).

It belongs to the GcvH family. In terms of assembly, the glycine cleavage system is composed of four proteins: P, T, L and H. (R)-lipoate serves as cofactor.

The glycine cleavage system catalyzes the degradation of glycine. The H protein shuttles the methylamine group of glycine from the P protein to the T protein. This chain is Glycine cleavage system H protein, found in Bacteroides fragilis (strain YCH46).